The primary structure comprises 167 residues: Small ribosomal subunit protein uS5 (167 aa).

One can recognise an S5 DRBM domain in the interval 12 to 75 (LREKLITINR…ERARGGMRTV (64 aa)).

Belongs to the universal ribosomal protein uS5 family. Part of the 30S ribosomal subunit. Contacts proteins S4 and S8.

With S4 and S12 plays an important role in translational accuracy. Its function is as follows. Located at the back of the 30S subunit body where it stabilizes the conformation of the head with respect to the body. The protein is Small ribosomal subunit protein uS5 of Halorhodospira halophila (strain DSM 244 / SL1) (Ectothiorhodospira halophila (strain DSM 244 / SL1)).